We begin with the raw amino-acid sequence, 209 residues long: Protein-L-isoaspartate O-methyltransferase (209 aa).

Ser60 is an active-site residue.

Belongs to the methyltransferase superfamily. L-isoaspartyl/D-aspartyl protein methyltransferase family.

The protein localises to the cytoplasm. It carries out the reaction [protein]-L-isoaspartate + S-adenosyl-L-methionine = [protein]-L-isoaspartate alpha-methyl ester + S-adenosyl-L-homocysteine. Catalyzes the methyl esterification of L-isoaspartyl residues in peptides and proteins that result from spontaneous decomposition of normal L-aspartyl and L-asparaginyl residues. It plays a role in the repair and/or degradation of damaged proteins. This chain is Protein-L-isoaspartate O-methyltransferase, found in Methanococcus vannielii (strain ATCC 35089 / DSM 1224 / JCM 13029 / OCM 148 / SB).